The sequence spans 191 residues: Protein Ves (191 aa).

It belongs to the Ves family.

This Escherichia coli O139:H28 (strain E24377A / ETEC) protein is Protein Ves.